Here is a 21-residue protein sequence, read N- to C-terminus: Venom nerve growth factor Bco12 (21 aa).

The protein belongs to the NGF-beta family. In terms of assembly, homodimer; non-covalently linked. Glycosylated. In terms of tissue distribution, expressed by the venom gland.

It localises to the secreted. Its function is as follows. Nerve growth factor is important for the development and maintenance of the sympathetic and sensory nervous systems. It stimulates division and differentiation of sympathetic and embryonic sensory neurons as well as basal forebrain cholinergic neurons in the brain. Its relevance in the snake venom is not clear. However, it has been shown to inhibit metalloproteinase-dependent proteolysis of platelet glycoprotein Ib alpha, suggesting a metalloproteinase inhibition to prevent metalloprotease autodigestion and/or protection against prey proteases. Binds a lipid between the two protein chains in the homodimer. The lipid-bound form promotes histamine relase from mouse mast cells, contrary to the lipid-free form. This chain is Venom nerve growth factor Bco12, found in Bothrops cotiara (Cotiara).